The sequence spans 185 residues: Small ribosomal subunit protein uS5 (185 aa).

The region spanning 29 to 92 is the S5 DRBM domain; that stretch reads LEEKVVKINR…EKAKKQLVRI (64 aa).

This sequence belongs to the universal ribosomal protein uS5 family. Part of the 30S ribosomal subunit. Contacts proteins S4 and S8.

With S4 and S12 plays an important role in translational accuracy. Its function is as follows. Located at the back of the 30S subunit body where it stabilizes the conformation of the head with respect to the body. This Aster yellows witches'-broom phytoplasma (strain AYWB) protein is Small ribosomal subunit protein uS5.